A 328-amino-acid chain; its full sequence is MSQTTATLPLPSPESAIALAGSGEDNLTYLAHHTGAKLILRGQELMVVGTEKAVARVMAVLQSLAPYWQSAKAISRPDLMTAFHALDTGKQEEHQALQKTVLAKTRRGEIVRAKTFRQRQYIKAIQKHDVTFCIGPAGTGKTFLAAVLAVQALLNNECDRLILTRPAVEAGEKLGFLPGDLQQKVDPFLRPLYDALYEFIEPEKIPDLMERGKIEVAPLAYMRGRTLTNAFVIVDEAQNTTPAQLKMVLTRLGFGSKMIVTGDITQTDLPNYQKSGLQVAQTILKDVEGVAFCYLNQADVVRHPLVQRIVEAYERSENTSPPAPKPSS.

Residue glycine 135–threonine 142 participates in ATP binding.

This sequence belongs to the PhoH family.

It localises to the cytoplasm. The sequence is that of PhoH-like protein from Synechocystis sp. (strain ATCC 27184 / PCC 6803 / Kazusa).